Consider the following 154-residue polypeptide: 6,7-dimethyl-8-ribityllumazine synthase (154 aa).

Residues Phe22, 56–58, and 80–82 contribute to the 5-amino-6-(D-ribitylamino)uracil site; these read AFE and AVI. 85-86 lines the (2S)-2-hydroxy-3-oxobutyl phosphate pocket; that stretch reads AT. His88 acts as the Proton donor in catalysis. Position 113 (Phe113) interacts with 5-amino-6-(D-ribitylamino)uracil. Residue Arg127 coordinates (2S)-2-hydroxy-3-oxobutyl phosphate.

This sequence belongs to the DMRL synthase family. In terms of assembly, forms an icosahedral capsid composed of 60 subunits, arranged as a dodecamer of pentamers.

The enzyme catalyses (2S)-2-hydroxy-3-oxobutyl phosphate + 5-amino-6-(D-ribitylamino)uracil = 6,7-dimethyl-8-(1-D-ribityl)lumazine + phosphate + 2 H2O + H(+). It participates in cofactor biosynthesis; riboflavin biosynthesis; riboflavin from 2-hydroxy-3-oxobutyl phosphate and 5-amino-6-(D-ribitylamino)uracil: step 1/2. Catalyzes the formation of 6,7-dimethyl-8-ribityllumazine by condensation of 5-amino-6-(D-ribitylamino)uracil with 3,4-dihydroxy-2-butanone 4-phosphate. This is the penultimate step in the biosynthesis of riboflavin. The polypeptide is 6,7-dimethyl-8-ribityllumazine synthase (Anoxybacillus flavithermus (strain DSM 21510 / WK1)).